The chain runs to 336 residues: MLKSRGIIKGINLGGWMSQCDYSRERLDNFVKENDIKQIADWGFDHVRLPIDYNIVQNNDGSVIEDGYNRIDKVVELCRKYGLKLVIDLHKTAGFSFDFGEPESGFFDNKEYQERFYILWEEIARRYGHDTDNIVFELLNEVTDEAFIGKWNEISDICIGRIRKIAPEVIILLGSYHNNAADTVQFLNAPHDDRVVYNFHCYEPLKFTHQGATWTPDIIPGERMKFEDSETSEAYFEELFSTAISTAEKYGTTLYCGEYGVIDVVSAEDSLKWFKVINKVFSKHGISRECGITRKWTSAFPTASTTATVRDTEVSVIKTRKAHNCCTLTEVFTRVY.

The active-site Proton donor is glutamate 141.

Belongs to the glycosyl hydrolase 5 (cellulase A) family.

The protein resides in the secreted. Crystalline cellulose degradation. This Ruminococcus flavefaciens protein is Cellodextrinase A (celA).